The sequence spans 302 residues: Oxygen-dependent coproporphyrinogen-III oxidase (302 aa).

Residue S94 coordinates substrate. Residues H98 and H108 each contribute to the a divalent metal cation site. Catalysis depends on H108, which acts as the Proton donor. Residue 110-112 (NVR) coordinates substrate. The a divalent metal cation site is built by H147 and H177. Residues 242 to 277 (YVEFNLVYDRGTLFGLQTGGRTESILMSMPPLARWE) form an important for dimerization region. Residue 260–262 (GGR) coordinates substrate.

It belongs to the aerobic coproporphyrinogen-III oxidase family. As to quaternary structure, homodimer. It depends on a divalent metal cation as a cofactor.

It localises to the cytoplasm. The catalysed reaction is coproporphyrinogen III + O2 + 2 H(+) = protoporphyrinogen IX + 2 CO2 + 2 H2O. Its pathway is porphyrin-containing compound metabolism; protoporphyrin-IX biosynthesis; protoporphyrinogen-IX from coproporphyrinogen-III (O2 route): step 1/1. Involved in the heme biosynthesis. Catalyzes the aerobic oxidative decarboxylation of propionate groups of rings A and B of coproporphyrinogen-III to yield the vinyl groups in protoporphyrinogen-IX. The sequence is that of Oxygen-dependent coproporphyrinogen-III oxidase from Aeromonas hydrophila subsp. hydrophila (strain ATCC 7966 / DSM 30187 / BCRC 13018 / CCUG 14551 / JCM 1027 / KCTC 2358 / NCIMB 9240 / NCTC 8049).